The chain runs to 244 residues: Geranylgeranylglyceryl phosphate synthase (244 aa).

Mg(2+)-binding residues include Asp20 and Ser49. Residues 169–175 (YLEAGSG), 200–201 (GG), and 222–223 (GT) each bind sn-glycerol 1-phosphate.

It belongs to the GGGP/HepGP synthase family. Group II subfamily. Requires Mg(2+) as cofactor.

The protein localises to the cytoplasm. It carries out the reaction sn-glycerol 1-phosphate + (2E,6E,10E)-geranylgeranyl diphosphate = sn-3-O-(geranylgeranyl)glycerol 1-phosphate + diphosphate. It functions in the pathway membrane lipid metabolism; glycerophospholipid metabolism. In terms of biological role, prenyltransferase that catalyzes the transfer of the geranylgeranyl moiety of geranylgeranyl diphosphate (GGPP) to the C3 hydroxyl of sn-glycerol-1-phosphate (G1P). This reaction is the first ether-bond-formation step in the biosynthesis of archaeal membrane lipids. The polypeptide is Geranylgeranylglyceryl phosphate synthase (Korarchaeum cryptofilum (strain OPF8)).